The primary structure comprises 225 residues: Membrane protein (225 aa).

Residues 1-20 (MSNETNCTLDFEQSVELFKE) lie on the Virion surface side of the membrane. A helical transmembrane segment spans residues 21–41 (YNLFITAFLLFLTIILQYGYA). Over 42–51 (TRSKFIYILK) the chain is Intravirion. A helical membrane pass occupies residues 52 to 72 (MIVLWCFWPLNIAVGVISCIY). The Virion surface portion of the chain corresponds to 73–77 (PPNTG). Residues 78 to 98 (GLVAAIILTVFACLSFVGYWI) form a helical membrane-spanning segment. The Intravirion segment spans residues 99–225 (QSIRLFKRCR…VATGGSSLYT (127 aa)).

The protein belongs to the gammacoronaviruses M protein family. As to quaternary structure, homomultimer. Interacts with envelope E protein in the budding compartment of the host cell, which is located between endoplasmic reticulum and the Golgi complex. Forms a complex with HE and S proteins. Interacts with nucleocapsid N protein. This interaction probably participates in RNA packaging into the virus.

The protein resides in the virion membrane. Its subcellular location is the host Golgi apparatus membrane. Its function is as follows. Component of the viral envelope that plays a central role in virus morphogenesis and assembly via its interactions with other viral proteins. This is Membrane protein from Gallus gallus (Chicken).